A 185-amino-acid polypeptide reads, in one-letter code: Ribosome-recycling factor (185 aa).

It belongs to the RRF family.

It localises to the cytoplasm. Functionally, responsible for the release of ribosomes from messenger RNA at the termination of protein biosynthesis. May increase the efficiency of translation by recycling ribosomes from one round of translation to another. In Hahella chejuensis (strain KCTC 2396), this protein is Ribosome-recycling factor.